Reading from the N-terminus, the 379-residue chain is MEQLRVLEFYSGIGGMHYGLQESGVDFQVIQSFDINTNANLNYKYTFNEDSSQKSIESYSVEELEGFKANAWLMSPPCQPFTRLGLQKDDQDNRTNSFFHLLDVLTKIKDPPTYILIENVFGFAKKGSSNTRDHLLDTLIKMNYSFQEFHLSPQQFGLANQRLRYFCIAKRNGKLNFKKEQDKHNEKVDENKLNNNSNNNNEQNKYDNLKILDHIPGYDFHTTLEECDEISNYFDKDLTDDELYEKYKVPHNLLLSKGMLFDIKQKDSKTSNCVTKSYGKFIEGTGSIIQMDNNFKADINDNKSLIPLKLRYFSPKEITRLHGFPEEFKFSPKLTTIQCYRLIGNSLNVKIVSELLKVLVSPNEEEEQQEQQKEKEGKK.

Residues 4–366 (LRVLEFYSGI…KVLVSPNEEE (363 aa)) enclose the SAM-dependent MTase C5-type domain. The active site involves Cys-78. Basic and acidic residues predominate over residues 178 to 192 (KKEQDKHNEKVDENK). Positions 178–205 (KKEQDKHNEKVDENKLNNNSNNNNEQNK) are disordered. The segment covering 193-203 (LNNNSNNNNEQ) has biased composition (low complexity).

It belongs to the class I-like SAM-binding methyltransferase superfamily. C5-methyltransferase family.

The protein resides in the nucleus. It carries out the reaction a 2'-deoxycytidine in DNA + S-adenosyl-L-methionine = a 5-methyl-2'-deoxycytidine in DNA + S-adenosyl-L-homocysteine + H(+). In terms of biological role, involved in epigenetic gene silencing. Methylates specific cytosine residues in the retrotransposons DIRS-1 and Skipper. This chain is DNA (cytosine-5)-methyltransferase (dnmA), found in Dictyostelium discoideum (Social amoeba).